A 138-amino-acid chain; its full sequence is Invertebrate-type lysozyme 6 (138 aa).

The N-terminal stretch at 1–18 (MFVKLCGILAFAVTYASS) is a signal peptide. Residues 19–138 (DCLQCICKKE…WNGIKGLGCS (120 aa)) enclose the I-type lysozyme domain. Intrachain disulfides connect Cys20/Cys106, Cys25/Cys31, Cys36/Cys45, Cys58/Cys86, Cys76/Cys82, and Cys98/Cys120. The active-site Proton donor is Glu28. Asp39 functions as the Nucleophile in the catalytic mechanism. 51-57 (KLSYYKD) is a binding site for substrate. Residues Tyr90 and 113–115 (HNG) each bind substrate.

It belongs to the glycosyl hydrolase 22 family. Type-I lysozyme subfamily. In terms of tissue distribution, expressed in pharyngeal gland cells and duct projections, coelomocytes and intestine.

It carries out the reaction Hydrolysis of (1-&gt;4)-beta-linkages between N-acetylmuramic acid and N-acetyl-D-glucosamine residues in a peptidoglycan and between N-acetyl-D-glucosamine residues in chitodextrins.. In terms of biological role, has bacteriolytic activity against Gram-positive bacteria. The sequence is that of Invertebrate-type lysozyme 6 from Caenorhabditis elegans.